We begin with the raw amino-acid sequence, 1004 residues long: UPF0182 protein Noca_1530 (1004 aa).

A disordered region spans residues 1–20 (MSELFDEAPRDPGPPARSGS). The next 7 membrane-spanning stretches (helical) occupy residues 26-46 (LIVTAVVLVIGFLGLSTFAGI), 71-91 (VLFFLFGAGMALVVGVNIYLA), 120-140 (TWLLVGVALVLGAFAGSSAIG), 183-203 (MAVLVVALIAAAVVHYLYGGI), 212-232 (LSGAAQAQISVLLGFFVLAKA), 261-281 (VLPAKNILLGISIICAVLFFV), and 293-313 (VGLALLAVSAILLGLIWPGIV). 2 disordered regions span residues 899 to 924 (GVSTGPGTQPPDTGQPGDNENPPPAT) and 974 to 1004 (LGQKRGSAGQPSGSPSGSASSSPSESPSPSS). Composition is skewed to low complexity over residues 903 to 916 (GPGTQPPDTGQPGD) and 979 to 1004 (GSAGQPSGSPSGSASSSPSESPSPSS).

This sequence belongs to the UPF0182 family.

It is found in the cell membrane. The polypeptide is UPF0182 protein Noca_1530 (Nocardioides sp. (strain ATCC BAA-499 / JS614)).